We begin with the raw amino-acid sequence, 469 residues long: Signal recognition particle 54 kDa protein (469 aa).

GTP-binding positions include G104–T111, D184–R188, and T242–D245. Disordered stretches follow at residues E388–P410 and Q447–D469. Positions Q448 to D469 are enriched in gly residues.

This sequence belongs to the GTP-binding SRP family. SRP54 subfamily. As to quaternary structure, part of the signal recognition particle protein translocation system, which is composed of SRP and FtsY. Archaeal SRP consists of a 7S RNA molecule of 300 nucleotides and two protein subunits: SRP54 and SRP19.

The protein resides in the cytoplasm. It carries out the reaction GTP + H2O = GDP + phosphate + H(+). In terms of biological role, involved in targeting and insertion of nascent membrane proteins into the cytoplasmic membrane. Binds to the hydrophobic signal sequence of the ribosome-nascent chain (RNC) as it emerges from the ribosomes. The SRP-RNC complex is then targeted to the cytoplasmic membrane where it interacts with the SRP receptor FtsY. The polypeptide is Signal recognition particle 54 kDa protein (Haloarcula marismortui (strain ATCC 43049 / DSM 3752 / JCM 8966 / VKM B-1809) (Halobacterium marismortui)).